The following is a 657-amino-acid chain: Protein mono-ADP-ribosyltransferase TIPARP (657 aa).

Positions 1-10 (MEVETTEPEP) are enriched in acidic residues. The tract at residues 1 to 22 (MEVETTEPEPDCVVQPPSPSDD) is disordered. C39 is subject to ADP-ribosylcysteine. Residues 41 to 48 (KKKQEQKR) carry the Nuclear localization signal motif. The disordered stretch occupies residues 121–154 (QLPEAHPSTDAPEQGVPIQDHSFPPETISGTVAD). A C3H1-type zinc finger spans residues 238–265 (ENGIEICMDFLQGTCIYGRDCLKHHTVL). The WWE domain occupies 333 to 411 (STPPCSNSNS…RRPLFRSCFI (79 aa)). Residues 449–657 (YPETWVYMHP…YEEVSNTVSI (209 aa)) form the PARP catalytic domain.

The protein belongs to the ARTD/PARP family. In terms of assembly, interacts with AHR. Auto-mono-ADP-ribosylated. As to expression, ubiquitously expressed.

The protein resides in the nucleus. It catalyses the reaction L-aspartyl-[protein] + NAD(+) = 4-O-(ADP-D-ribosyl)-L-aspartyl-[protein] + nicotinamide. The catalysed reaction is L-glutamyl-[protein] + NAD(+) = 5-O-(ADP-D-ribosyl)-L-glutamyl-[protein] + nicotinamide. It carries out the reaction L-cysteinyl-[protein] + NAD(+) = S-(ADP-D-ribosyl)-L-cysteinyl-[protein] + nicotinamide + H(+). ADP-ribosyltransferase that mediates mono-ADP-ribosylation of glutamate, aspartate and cysteine residues on target proteins. Acts as a negative regulator of AHR by mediating mono-ADP-ribosylation of AHR, leading to inhibit transcription activator activity of AHR. This is Protein mono-ADP-ribosyltransferase TIPARP from Mus musculus (Mouse).